The sequence spans 1370 residues: DNA-directed RNA polymerase subunit beta (1370 aa).

The protein belongs to the RNA polymerase beta chain family. In terms of assembly, the RNAP catalytic core consists of 2 alpha, 1 beta, 1 beta' and 1 omega subunit. When a sigma factor is associated with the core the holoenzyme is formed, which can initiate transcription.

It catalyses the reaction RNA(n) + a ribonucleoside 5'-triphosphate = RNA(n+1) + diphosphate. DNA-dependent RNA polymerase catalyzes the transcription of DNA into RNA using the four ribonucleoside triphosphates as substrates. The sequence is that of DNA-directed RNA polymerase subunit beta from Albidiferax ferrireducens (strain ATCC BAA-621 / DSM 15236 / T118) (Rhodoferax ferrireducens).